The primary structure comprises 419 residues: Variant surface glycoprotein YnAT 1.1 (419 aa).

Positions 1 to 28 (MKRVLSNVLKAWIFTIVAFHNFSTSVTA) are cleaved as a signal peptide. N-linked (GlcNAc...) asparagine glycosylation is found at N82 and N358. The tract at residues 369-405 (ESSRPPSTDANTSQKGPLQRPEKSGESSHLPSGSSHG) is disordered. A compositionally biased stretch (polar residues) spans 372 to 384 (RPPSTDANTSQKG). The N-linked (GlcNAc...) (high mannose) asparagine glycan is linked to N379. Positions 395-405 (SSHLPSGSSHG) are enriched in low complexity. S400 is lipidated: GPI-anchor amidated serine. The propeptide at 401 to 419 (GSSHGTKAIRSILHVALLM) is removed in mature form.

The protein localises to the cell membrane. In terms of biological role, VSG forms a coat on the surface of the parasite. The trypanosome evades the immune response of the host by expressing a series of antigenically distinct VSGs from an estimated 1000 VSG genes. This is Variant surface glycoprotein YnAT 1.1 from Trypanosoma congolense.